A 232-amino-acid polypeptide reads, in one-letter code: MKVGIIGAMEQEVTLLRDRIENRQTLRLASGEIYTGRLHGVEVALLKSGIGKVSAAMGTTLLLDHCRPDVVINTGSAGGLASTLRVGDIVISDEVRYHDADVTAFGYQPGQMAGCPAAFSADAALIALAERCIIALQLNAVRGLICSGDAFINGAEPLARIRRTFPQVAAVEMEAAAIGHVCHAFQTPFVVVRAISDVADQESHISFDEFLKVAAEQSTLMVEAMLRAMASQ.

Glu12 serves as the catalytic Proton acceptor. Residues Gly78, Ile152, and 173 to 174 (ME) contribute to the substrate site. Asp197 (proton donor) is an active-site residue.

Belongs to the PNP/UDP phosphorylase family. MtnN subfamily. Homodimer.

It carries out the reaction S-adenosyl-L-homocysteine + H2O = S-(5-deoxy-D-ribos-5-yl)-L-homocysteine + adenine. It catalyses the reaction S-methyl-5'-thioadenosine + H2O = 5-(methylsulfanyl)-D-ribose + adenine. The enzyme catalyses 5'-deoxyadenosine + H2O = 5-deoxy-D-ribose + adenine. The protein operates within amino-acid biosynthesis; L-methionine biosynthesis via salvage pathway; S-methyl-5-thio-alpha-D-ribose 1-phosphate from S-methyl-5'-thioadenosine (hydrolase route): step 1/2. Functionally, catalyzes the irreversible cleavage of the glycosidic bond in both 5'-methylthioadenosine (MTA) and S-adenosylhomocysteine (SAH/AdoHcy) to adenine and the corresponding thioribose, 5'-methylthioribose and S-ribosylhomocysteine, respectively. Also cleaves 5'-deoxyadenosine, a toxic by-product of radical S-adenosylmethionine (SAM) enzymes, into 5-deoxyribose and adenine. Thus, is required for in vivo function of the radical SAM enzymes biotin synthase and lipoic acid synthase, that are inhibited by 5'-deoxyadenosine accumulation. This is 5'-methylthioadenosine/S-adenosylhomocysteine nucleosidase from Edwardsiella ictaluri (strain 93-146).